The chain runs to 530 residues: C2H2-type transcription factor MSN2 (530 aa).

2 C2H2-type zinc fingers span residues 409–432 (FVCD…RSLH) and 438–460 (FECN…ARTH).

The protein localises to the nucleus. The protein resides in the cytoplasm. Functionally, transcription factor that acts as a key downstream transcription factor in the HOG1-MAPK pathway. Plays crucial roles in the regulation of conidiation, virulence and multi-stress responses. In addition to regulating the expression of genes specifically involved in stress-response, conidiation and virulence, controls also expression of cellular signaling factors. This chain is C2H2-type transcription factor MSN2, found in Metarhizium robertsii (strain ARSEF 23 / ATCC MYA-3075) (Metarhizium anisopliae (strain ARSEF 23)).